Here is a 236-residue protein sequence, read N- to C-terminus: C-&gt;U-editing enzyme APOBEC-1 (236 aa).

One can recognise a CMP/dCMP-type deaminase domain in the interval 10–134; it reads GDPTLRRRIE…QQNRQGLRDL (125 aa). His61 is a Zn(2+) binding site. The Proton donor role is filled by Glu63. Zn(2+) contacts are provided by Cys93 and Cys96.

It belongs to the cytidine and deoxycytidylate deaminase family. As to quaternary structure, homodimer. Interacts with A1CF; form an mRNA editing complex. Interacts with RBM47; form an mRNA editing complex. Found in a complex with CELF2/CUGBP2 and A1CF. Interacts with HNRPAB. Interacts with SYNCRIP. Requires Zn(2+) as cofactor. As to expression, expressed exclusively in the small intestine.

It is found in the cytoplasm. Its subcellular location is the nucleus. The enzyme catalyses a cytidine in mRNA + H2O + H(+) = a uridine in mRNA + NH4(+). It catalyses the reaction cytidine(6666) in apoB mRNA + H2O + H(+) = uridine(6666) in apoB mRNA + NH4(+). Its function is as follows. Cytidine deaminase catalyzing the cytidine to uridine postranscriptional editing of a variety of mRNAs. Form complexes with cofactors that confer differential editing activity and selectivity. Responsible for the postranscriptional editing of a CAA codon for Gln to a UAA codon for stop in the apolipoprotein B mRNA. Also involved in CGA (Arg) to UGA (Stop) editing in the NF1 mRNA. May also play a role in the epigenetic regulation of gene expression by participating in DNA demethylation. The chain is C-&gt;U-editing enzyme APOBEC-1 from Homo sapiens (Human).